We begin with the raw amino-acid sequence, 511 residues long: Probable endopeptidase p60 (511 aa).

A signal peptide spans 1 to 27; it reads MNMKKATIVSAAGIAVTAFAAPSVVSA. Residues 28–71 form the LysM 1 domain; it reads NTVVVASGDTLWGIASKTGTTVDQLKQLNKLDSDRIVPGQKLTI. One can recognise an SH3b domain in the interval 78 to 142; sequence KVEKSVSATW…VNGKYLSDAK (65 aa). The LysM 2 domain maps to 175-218; sequence STYKVKSGDTIWALSVKYGVPVQKLIEWNNLSSSSIYVGQTIAV. 2 stretches are compositionally biased toward low complexity: residues 229-257 and 264-282; these read TVKQAAPAKVAPKQEVKQTAPAKQEQAKP and KPAVSKPKAATPAPTAKPA. The segment at 229–291 is disordered; sequence TVKQAAPAKV…AVEQKASTPA (63 aa). The region spanning 297-341 is the LysM 3 domain; the sequence is ATYKVQNGDSLGKIASLFKVSVADLTNWNNLNATITIYAGQELSV. 2 stretches are compositionally biased toward low complexity: residues 347–362 and 372–390; these read KPKPAAPAKPAVSKPA and TNTTNNSTPTTNVNNNTSQ. A disordered region spans residues 347–390; sequence KPKPAAPAKPAVSKPATSTPAKVTPTNTTNNSTPTTNVNNNTSQ. The NlpC/P60 domain maps to 393–511; that stretch reads SASFSALYAE…GQYLVGFGRV (119 aa). The active-site Nucleophile is cysteine 423. Residue histidine 473 is the Proton acceptor of the active site. The active site involves aspartate 485.

The protein belongs to the peptidase C40 family.

Its function is as follows. This major extracellular protein may be involved in the invasion of non-professional phagocytic cells by Listeria. This Listeria grayi (Listeria murrayi) protein is Probable endopeptidase p60 (iap).